Here is an 815-residue protein sequence, read N- to C-terminus: Probable oligoxyloglucan-reducing end-specific xyloglucanase (815 aa).

Residues 1–19 form the signal peptide; that stretch reads MKFWLQQLGLAVLCASSAA. Asp-58 serves as the catalytic Nucleophile. N-linked (GlcNAc...) asparagine glycosylation is present at Asn-113. Residues 118 to 128 form a BNR 1 repeat; it reads FVSNDRGATFT. The N-linked (GlcNAc...) asparagine glycan is linked to Asn-180. One copy of the BNR 2 repeat lies at 218 to 228; sequence YYTTDGGKNWE. N-linked (GlcNAc...) asparagine glycosylation is found at Asn-246, Asn-290, and Asn-304. Residues 351 to 361 form a BNR 3 repeat; that stretch reads YLSRDGGKTWK. Asn-387 is a glycosylation site (N-linked (GlcNAc...) asparagine). Asp-489 acts as the Proton donor in catalysis. A BNR 4 repeat occupies 545 to 555; the sequence is YSTDGGSEWTK. N-linked (GlcNAc...) asparagine glycosylation is found at Asn-564 and Asn-603. A BNR 5 repeat occupies 649–658; it reads YVSTDGGLSY. Asn-662 carries an N-linked (GlcNAc...) asparagine glycan. BNR repeat units follow at residues 696–706 and 749–759; these read YHTTDFGKRWK and YRSDDNGSTWD. N-linked (GlcNAc...) asparagine glycosylation is present at Asn-754.

Belongs to the glycosyl hydrolase 74 family.

It is found in the secreted. The catalysed reaction is Hydrolysis of cellobiose from the reducing end of xyloglucans consisting of a beta-(1-&gt;4)-linked glucan carrying alpha-D-xylosyl groups on O-6 of the glucose residues. To be a substrate, the first residue must be unsubstituted, the second residue may bear a xylosyl group, whether further glycosylated or not, and the third residue, which becomes the new terminus by the action of the enzyme, is preferably xylosylated, but this xylose residue must not be further substituted.. In terms of biological role, oligoxyloglucan-reducing end-specific xyloglucanase involved in degradation of xyloglucans. Releases the first two glycosyl segments from oligoxyloglucans. Active against cotton xyloglucan, tamarind xyloglucan and tamarind xyloglucan oligomers. This is Probable oligoxyloglucan-reducing end-specific xyloglucanase (xgcA) from Neosartorya fischeri (strain ATCC 1020 / DSM 3700 / CBS 544.65 / FGSC A1164 / JCM 1740 / NRRL 181 / WB 181) (Aspergillus fischerianus).